We begin with the raw amino-acid sequence, 912 residues long: Protein translocase subunit SecA (912 aa).

ATP is bound by residues Gln87, 105–109 (GEGKT), and Asp508. The disordered stretch occupies residues 855 to 912 (QHQDAGGYGADEEVEQMQGGNAPVPVSQVTRDEPKVGRNDPCPCGSGKKYKHCHGQLS). Positions 896, 898, 907, and 908 each coordinate Zn(2+). Residues 902 to 912 (KKYKHCHGQLS) show a composition bias toward basic residues.

The protein belongs to the SecA family. In terms of assembly, monomer and homodimer. Part of the essential Sec protein translocation apparatus which comprises SecA, SecYEG and auxiliary proteins SecDF-YajC and YidC. It depends on Zn(2+) as a cofactor.

Its subcellular location is the cell inner membrane. The protein resides in the cytoplasm. The catalysed reaction is ATP + H2O + cellular proteinSide 1 = ADP + phosphate + cellular proteinSide 2.. In terms of biological role, part of the Sec protein translocase complex. Interacts with the SecYEG preprotein conducting channel. Has a central role in coupling the hydrolysis of ATP to the transfer of proteins into and across the cell membrane, serving both as a receptor for the preprotein-SecB complex and as an ATP-driven molecular motor driving the stepwise translocation of polypeptide chains across the membrane. This is Protein translocase subunit SecA from Xanthomonas campestris pv. campestris (strain 8004).